The following is a 96-amino-acid chain: UPF0235 protein YggU (96 aa).

It belongs to the UPF0235 family.

This Salmonella newport (strain SL254) protein is UPF0235 protein YggU.